Consider the following 357-residue polypeptide: uncharacterized protein (357 aa).

This is an uncharacterized protein from Mycoplasma pneumoniae (strain ATCC 29342 / M129 / Subtype 1) (Mycoplasmoides pneumoniae).